Consider the following 309-residue polypeptide: uncharacterized protein (309 aa).

Pro residues-rich tracts occupy residues 1–17 and 24–51; these read MTSR…PSPP and SPVP…PTPR. 2 disordered regions span residues 1–174 and 216–240; these read MTSR…PPGV and PPDL…PLHA. The segment covering 67–83 has biased composition (low complexity); sequence LRSSPSSALNASRGAPS. Over residues 84–112 the composition is skewed to pro residues; that stretch reads TSPPPSSSPPSSPASTPPSRTPSPTPTAP. 2 stretches are compositionally biased toward low complexity: residues 113–125 and 135–144; these read ASPV…TPAS and APSSSAALSS. Residues 160–174 are compositionally biased toward pro residues; that stretch reads PPPPLPPPLQPPPGV. Residues 278 to 298 form a helical membrane-spanning segment; sequence LFLLFTLLSIHFSPFPIFILL.

The protein resides in the host membrane. This is an uncharacterized protein from Vitis vinifera (Grape).